Here is a 138-residue protein sequence, read N- to C-terminus: MIVGIGNDLVEIQRLTNMLNKGHGQRFLERCFTQQEQQLCNGRSTPQRACCYAKRFAAKEAVIKALGVGFRQGLWFTDIEVLPNQLGRPTVTLHGATAQWLACHHPGQVNIHLSLSDEKGLAIATALIECHPLAMAPS.

2 residues coordinate Mg(2+): aspartate 8 and glutamate 60.

It belongs to the P-Pant transferase superfamily. AcpS family. Requires Mg(2+) as cofactor.

The protein resides in the cytoplasm. The enzyme catalyses apo-[ACP] + CoA = holo-[ACP] + adenosine 3',5'-bisphosphate + H(+). Functionally, transfers the 4'-phosphopantetheine moiety from coenzyme A to a Ser of acyl-carrier-protein. The sequence is that of Holo-[acyl-carrier-protein] synthase from Magnetococcus marinus (strain ATCC BAA-1437 / JCM 17883 / MC-1).